The following is a 117-amino-acid chain: Inner kinetochore subunit MHF1 (117 aa).

The protein belongs to the TAF9 family. CENP-S/MHF1 subfamily. In terms of assembly, the MHF histone-fold complex is a heterotetramer of 2 MHF1-MHF2 heterodimers. Together with MPH1/FANCM, forms the FANCM-MHF complex. Component of the inner kinetochore constitutive centromere-associated network (CCAN).

DsDNA-binding component of a FANCM-MHF complex involved in DNA damage repair and genome maintenance. FANCM-MHF promotes gene conversion at blocked replication forks, probably by reversal of the stalled fork. Component of the kinetochore, a multiprotein complex that assembles on centromeric DNA and attaches chromosomes to spindle microtubules, mediating chromosome segregation and sister chromatid segregation during meiosis and mitosis. Component of the inner kinetochore constitutive centromere-associated network (CCAN), which serves as a structural platform for outer kinetochore assembly. The sequence is that of Inner kinetochore subunit MHF1 from Candida albicans (strain SC5314 / ATCC MYA-2876) (Yeast).